A 182-amino-acid polypeptide reads, in one-letter code: MKSIAVTGYKNFELGIFKKDADEAIYIKETMKRHLVPLIEDGLEWVIISGQLGIELWAGEVVGELKKEAYAIKLAILEPFENQSGNWNEANKIWASEVLTIADYHAFITKRPYENPSQFAARDGFIIDNTDGAILVYDLEKEGSPKFFYDRAKLAKERSDYYLECIDFYALQDVVEDMNQAF.

Belongs to the UPF0398 family.

This chain is UPF0398 protein lwe1908, found in Listeria welshimeri serovar 6b (strain ATCC 35897 / DSM 20650 / CCUG 15529 / CIP 8149 / NCTC 11857 / SLCC 5334 / V8).